We begin with the raw amino-acid sequence, 164 residues long: C-type natriuretic peptide (164 aa).

Positions 1–23 (MVASRLAAGGLLLLALLALALDG) are cleaved as a signal peptide. 2 disordered regions span residues 24–93 (KPAP…AAAA) and 115–134 (HPEH…GASR). The propeptide occupies 24–142 (KPAPPQPLRK…SRRLKGVAKK (119 aa)). Gly residues predominate over residues 58 to 67 (AGGGGGGGRS). Residues 68–93 (GSKAANAAPTAPKSKGGAAAAAAAAA) are compositionally biased toward low complexity. The segment covering 121 to 132 (GGGGGGGGGGGA) has biased composition (gly residues). A disulfide bridge connects residues Cys148 and Cys164.

This sequence belongs to the natriuretic peptide family. Expressed by the venom gland.

It localises to the secreted. Its function is as follows. Snake venom natriuretic peptide that has a vasorelaxant activity in rat aortic strips and a diuretic potency in anesthetized rats. May act by activating natriuretic receptors (NPR1 and/or NPR2). This Philodryas olfersii (Green snake) protein is C-type natriuretic peptide.